Consider the following 176-residue polypeptide: Ribosome rescue factor SmrB (176 aa).

The Smr domain maps to 93–168; it reads LDLHGYRQSE…GDAALLVLID (76 aa).

This sequence belongs to the SmrB family. As to quaternary structure, associates with collided ribosomes, but not with correctly translating polysomes.

In terms of biological role, acts as a ribosome collision sensor. Detects stalled/collided disomes (pairs of ribosomes where the leading ribosome is stalled and a second ribosome has collided with it) and endonucleolytically cleaves mRNA at the 5' boundary of the stalled ribosome. Stalled/collided disomes form a new interface (primarily via the 30S subunits) that binds SmrB. Cleaved mRNA becomes available for tmRNA ligation, leading to ribosomal subunit dissociation and rescue of stalled ribosomes. This Shewanella putrefaciens (strain CN-32 / ATCC BAA-453) protein is Ribosome rescue factor SmrB.